Reading from the N-terminus, the 210-residue chain is Large ribosomal subunit protein uL3 (210 aa).

Positions 119-151 are disordered; that stretch reads FQGAIKRHGQSRGPMSHGSRYHRRPGSMGPVAP.

Belongs to the universal ribosomal protein uL3 family. Part of the 50S ribosomal subunit. Forms a cluster with proteins L14 and L19.

Its function is as follows. One of the primary rRNA binding proteins, it binds directly near the 3'-end of the 23S rRNA, where it nucleates assembly of the 50S subunit. In Bacillus cytotoxicus (strain DSM 22905 / CIP 110041 / 391-98 / NVH 391-98), this protein is Large ribosomal subunit protein uL3.